Here is a 482-residue protein sequence, read N- to C-terminus: 7-deoxyloganetic acid glucosyl transferase (482 aa).

The active-site Proton acceptor is the His22. His22 lines the an anthocyanidin pocket. Catalysis depends on Asp127, which acts as the Charge relay. Residues Thr149, Ala362, Gln364, His379, Trp382, Asn383, Ser384, and Glu387 each coordinate UDP-alpha-D-glucose. Ala402 provides a ligand contact to an anthocyanidin. Residues Asp403 and Gln404 each coordinate UDP-alpha-D-glucose.

Belongs to the UDP-glycosyltransferase family. In terms of tissue distribution, expressed in the leaf internal phloem-associated parenchyma (IPAP) inside the mesophyll. Mostly observed in leaves, roots and stems, and, to a lower extent, in flowers.

It is found in the nucleus. The protein resides in the cytoplasm. Its subcellular location is the cytosol. It carries out the reaction 7-deoxyloganetate + UDP-alpha-D-glucose = 7-deoxyloganate + UDP + H(+). It participates in alkaloid biosynthesis. Functionally, component of the seco-iridoid and derivatives monoterpenoid indole alkaloids (MIAs, e.g. vincristine, quinine, and strychnine) biosynthesis pathway. Catalyzes the glucosylation of 7-deoxyloganetic acid to form 7-deoxyloganic acid using UDP-glucose as the sugar donor. Inactive with loganetic acid, loganetin, iridodial, iridotrial, 8-OH-geraniol, jasmonic acid, gibberellic acid, indole acetic acid, salicylic acid, abscisic acid, zeatin and luteolin. This chain is 7-deoxyloganetic acid glucosyl transferase, found in Catharanthus roseus (Madagascar periwinkle).